Consider the following 238-residue polypeptide: NADH-quinone oxidoreductase subunit C (238 aa).

Residues 1–20 form a disordered region; sequence MSSPDQNPSDAAGQTGSSNE.

Belongs to the complex I 30 kDa subunit family. In terms of assembly, NDH-1 is composed of 14 different subunits. Subunits NuoB, C, D, E, F, and G constitute the peripheral sector of the complex.

Its subcellular location is the cell membrane. The enzyme catalyses a quinone + NADH + 5 H(+)(in) = a quinol + NAD(+) + 4 H(+)(out). NDH-1 shuttles electrons from NADH, via FMN and iron-sulfur (Fe-S) centers, to quinones in the respiratory chain. The immediate electron acceptor for the enzyme in this species is believed to be a menaquinone. Couples the redox reaction to proton translocation (for every two electrons transferred, four hydrogen ions are translocated across the cytoplasmic membrane), and thus conserves the redox energy in a proton gradient. This is NADH-quinone oxidoreductase subunit C from Mycobacterium marinum (strain ATCC BAA-535 / M).